The chain runs to 367 residues: UDP-D-xylose:L-fucose alpha-1,3-D-xylosyltransferase (367 aa).

The segment covering 1-10 (MAQKQQTLHQ) has biased composition (polar residues). Positions 1–21 (MAQKQQTLHQQRPFSSSPRSY) are disordered. Topologically, residues 1 to 35 (MAQKQQTLHQQRPFSSSPRSYSSISNRPIFLLSRN) are cytoplasmic. Over residues 12–21 (RPFSSSPRSY) the composition is skewed to low complexity. A helical; Signal-anchor for type II membrane protein transmembrane segment spans residues 36–56 (GLLLVLLALFLLLGVFLPWPG). Topologically, residues 57 to 367 (SPLLLFPNKV…ALESPLGKLQ (311 aa)) are lumenal. Residues asparagine 85, asparagine 98, and asparagine 173 are each glycosylated (N-linked (GlcNAc...) asparagine). The DXD motif signature appears at 196–198 (DVD). N-linked (GlcNAc...) asparagine glycans are attached at residues asparagine 228 and asparagine 292.

It belongs to the glycosyltransferase 77 family. It depends on Mn(2+) as a cofactor. Requires Mg(2+) as cofactor. Post-translationally, glycosylated. In terms of tissue distribution, expressed in roots, rosette leaves, stems and flowers.

Its subcellular location is the golgi apparatus membrane. Its function is as follows. Catalyzes the transfer of D-xylose from UDP-alpha-D-xylose onto L-fucose. Probably involved in the biosynthesis of rhamnogalacturonan II (RG-II) through xylosylation of the internal fucose moiety of the A-chain of RG-II, a structurally complex pectic polysaccharide of the primary cell wall. RG-II is essential for the cell wall integrity of rapidly growing tissues such as roots and pollen tube growth and elongation. This Arabidopsis thaliana (Mouse-ear cress) protein is UDP-D-xylose:L-fucose alpha-1,3-D-xylosyltransferase.